The primary structure comprises 709 residues: Fatty acid oxidation complex subunit alpha (709 aa).

Residues 1–188 form an enoyl-CoA hydratase region; sequence MEKTFNLTRR…KMGLVNDVVP (188 aa). The interval 308 to 709 is 3-hydroxyacyl-CoA dehydrogenase; sequence RKVKKAVILG…AMAAEKARFF (402 aa).

In the N-terminal section; belongs to the enoyl-CoA hydratase/isomerase family. It in the central section; belongs to the 3-hydroxyacyl-CoA dehydrogenase family. Heterotetramer of two alpha chains (FadJ) and two beta chains (FadI).

It localises to the cytoplasm. The catalysed reaction is a (3S)-3-hydroxyacyl-CoA = a (2E)-enoyl-CoA + H2O. The enzyme catalyses a 4-saturated-(3S)-3-hydroxyacyl-CoA = a (3E)-enoyl-CoA + H2O. It catalyses the reaction a (3S)-3-hydroxyacyl-CoA + NAD(+) = a 3-oxoacyl-CoA + NADH + H(+). It carries out the reaction (3S)-3-hydroxybutanoyl-CoA = (3R)-3-hydroxybutanoyl-CoA. It functions in the pathway lipid metabolism; fatty acid beta-oxidation. Its function is as follows. Catalyzes the formation of a hydroxyacyl-CoA by addition of water on enoyl-CoA. Also exhibits 3-hydroxyacyl-CoA epimerase and 3-hydroxyacyl-CoA dehydrogenase activities. The chain is Fatty acid oxidation complex subunit alpha from Shewanella sp. (strain ANA-3).